The following is a 364-amino-acid chain: MEPLLSFKSVSKQYDDMQILDKIDIDIESGYFYTLLGPSGCGKTTILKLIAGFEEADNGDIIYQGKSINHLSANKRKVNTVFQDYALFPHLNVYDNIAFGLKLKKLAKSEIKRKVHEALKLVKLEGYESRTIEGISGGQKQRIAIARAIVNEPEILLLDESLSALDLKLRTEMQYELREIQSRLGITFIFVTHDQEEALALSDYIFVMKDGKIQQFGTPIDIYDEPVNRFVADFIGESNIVEGKMVKDYLVNIYGQDFECVDMGIPEQKKVEIVIRPEDISLIDAKSGLFEVTVDSMLFRGVHYEINCIDRKGYEWMIHSTKKAEVGSKVGLYFDPEAIHIMVPGETEEEFDKRIESYEEQDNA.

The 231-residue stretch at 5 to 235 folds into the ABC transporter domain; sequence LSFKSVSKQY…PVNRFVADFI (231 aa). 37 to 44 is a binding site for ATP; sequence GPSGCGKT.

This sequence belongs to the ABC transporter superfamily. Spermidine/putrescine importer (TC 3.A.1.11.1) family. The complex is composed of two ATP-binding proteins (PotA), two transmembrane proteins (PotB and PotC) and a solute-binding protein (PotD).

It localises to the cell membrane. The enzyme catalyses ATP + H2O + polyamine-[polyamine-binding protein]Side 1 = ADP + phosphate + polyamineSide 2 + [polyamine-binding protein]Side 1.. Part of the ABC transporter complex PotABCD involved in spermidine/putrescine import. Responsible for energy coupling to the transport system. The sequence is that of Spermidine/putrescine import ATP-binding protein PotA from Staphylococcus saprophyticus subsp. saprophyticus (strain ATCC 15305 / DSM 20229 / NCIMB 8711 / NCTC 7292 / S-41).